Here is a 170-residue protein sequence, read N- to C-terminus: Probable phospholipid hydroperoxide glutathione peroxidase (170 aa).

The active site involves C44.

This sequence belongs to the glutathione peroxidase family.

The protein localises to the cytoplasm. The enzyme catalyses a hydroperoxy polyunsaturated fatty acid + 2 glutathione = a hydroxy polyunsaturated fatty acid + glutathione disulfide + H2O. Protects cells and enzymes from oxidative damage, by catalyzing the reduction of hydrogen peroxide, lipid peroxides and organic hydroperoxide, by glutathione. The polypeptide is Probable phospholipid hydroperoxide glutathione peroxidase (GPXMC1) (Mesembryanthemum crystallinum (Common ice plant)).